We begin with the raw amino-acid sequence, 108 residues long: Synaptobrevin-1 (108 aa).

The segment at Met1–Gln25 is disordered. At Met1–Lys85 the chain is on the cytoplasmic side. Residues Arg22 to Lys82 enclose the v-SNARE coiled-coil homology domain. A helical; Anchor for type IV membrane protein membrane pass occupies residues Met86–Gly106. At Gly107–Lys108 the chain is on the extracellular side.

This sequence belongs to the synaptobrevin family. In terms of assembly, part of the SNARE core complex containing CBG09569/SNAP25, snb-1/VAMP2 and CBG03570/STX1A. This complex binds to cpx-1/CPLX1.

The protein resides in the cytoplasmic vesicle. It localises to the secretory vesicle. Its subcellular location is the synaptic vesicle membrane. It is found in the cell membrane. The protein localises to the synapse. The protein resides in the synaptosome. Involved in the targeting and/or fusion of transport vesicles to their target membrane. Acts in neuronal exocytosis of synaptic transmission. Likely to have a role in cholinergic transmisson. Required for viability, coordinated movement and M3 pharynx motor neuron function. This Caenorhabditis briggsae protein is Synaptobrevin-1.